A 159-amino-acid polypeptide reads, in one-letter code: Probable NADH dehydrogenase [ubiquinone] 1 alpha subcomplex subunit 12 (159 aa).

This sequence belongs to the complex I NDUFA12 subunit family. Complex I is composed of at least 49 different subunits.

The protein resides in the mitochondrion inner membrane. Accessory subunit of the mitochondrial membrane respiratory chain NADH dehydrogenase (Complex I), that is believed not to be involved in catalysis. Complex I functions in the transfer of electrons from NADH to the respiratory chain. The immediate electron acceptor for the enzyme is believed to be ubiquinone. The sequence is that of Probable NADH dehydrogenase [ubiquinone] 1 alpha subcomplex subunit 12 from Arabidopsis thaliana (Mouse-ear cress).